The chain runs to 541 residues: Metal transporter Nramp6 (541 aa).

The span at 1 to 18 (MAPLPAAATATASSAATP) shows a compositional bias: low complexity. Residues 1–44 (MAPLPAAATATASSAATPADDEAHSLLPSTPSNEEDDDDLEERA) form a disordered region. The next 12 helical transmembrane spans lie at 87–107 (LWLF…PGNL), 120–140 (TLLW…LLAA), 172–192 (VAMV…IKIL), 196–216 (FLPL…FLSL), 224–244 (LEAV…WMFT), 270–290 (AVGV…SALV), 316–336 (IALA…AKGF), 358–378 (FGGG…AAGQ), 404–424 (IRSL…ALFF), 436–456 (WLNV…ITLV), 474–494 (VTWT…LDFF), and 502–522 (LSGS…LYLI).

The protein belongs to the NRAMP (TC 2.A.55) family.

Its subcellular location is the membrane. In terms of biological role, probable metal transporter. This chain is Metal transporter Nramp6 (NRAMP6), found in Oryza sativa subsp. japonica (Rice).